We begin with the raw amino-acid sequence, 569 residues long: Urease subunit alpha (569 aa).

The region spanning 131–569 (GGFDAHIHFI…LPLAQRYFMY (439 aa)) is the Urease domain. Residues His-136, His-138, and Lys-219 each coordinate Ni(2+). Lys-219 carries the N6-carboxylysine modification. Residue His-221 participates in substrate binding. Positions 248 and 274 each coordinate Ni(2+). The active-site Proton donor is the His-322. Asp-362 serves as a coordination point for Ni(2+).

This sequence belongs to the metallo-dependent hydrolases superfamily. Urease alpha subunit family. In terms of assembly, heterotrimer of UreA (gamma), UreB (beta) and UreC (alpha) subunits. Three heterotrimers associate to form the active enzyme. Ni cation serves as cofactor. In terms of processing, carboxylation allows a single lysine to coordinate two nickel ions.

It is found in the cytoplasm. It catalyses the reaction urea + 2 H2O + H(+) = hydrogencarbonate + 2 NH4(+). The protein operates within nitrogen metabolism; urea degradation; CO(2) and NH(3) from urea (urease route): step 1/1. The polypeptide is Urease subunit alpha (Jannaschia sp. (strain CCS1)).